Here is a 315-residue protein sequence, read N- to C-terminus: Glycine--tRNA ligase alpha subunit (315 aa).

The protein belongs to the class-II aminoacyl-tRNA synthetase family. As to quaternary structure, tetramer of two alpha and two beta subunits.

It localises to the cytoplasm. The enzyme catalyses tRNA(Gly) + glycine + ATP = glycyl-tRNA(Gly) + AMP + diphosphate. The protein is Glycine--tRNA ligase alpha subunit of Pseudomonas putida (strain W619).